A 144-amino-acid chain; its full sequence is Transcriptional regulator SlyA (144 aa).

Positions E2–R135 constitute an HTH marR-type domain. Residues Q49–S72 constitute a DNA-binding region (H-T-H motif).

It belongs to the SlyA family. Homodimer.

Its function is as follows. Transcription regulator that can specifically activate or repress expression of target genes. The sequence is that of Transcriptional regulator SlyA from Blochmanniella floridana.